A 173-amino-acid chain; its full sequence is Putative metal-dependent hydrolase BCG9842_B2589 (173 aa).

Positions 65, 156, and 160 each coordinate Zn(2+).

This sequence belongs to the metal hydrolase YfiT family. In terms of assembly, homodimer. Requires Zn(2+) as cofactor.

It is found in the cytoplasm. Possible metal-dependent hydrolase. The protein is Putative metal-dependent hydrolase BCG9842_B2589 of Bacillus cereus (strain G9842).